Consider the following 40-residue polypeptide: Cytolysin SmT-1 (40 aa).

The plays an important role in the hemolytic activity stretch occupies residues 3–12; the sequence is ALAGTIIAGA. The N-terminal region stretch occupies residues 11–30; the sequence is GASLGFQILDKVLGELGKVS.

Belongs to the actinoporin family. Sea anemone subfamily. As to quaternary structure, octamer or nonamer in membranes. Monomer in the soluble state.

It localises to the secreted. The protein resides in the nematocyst. The protein localises to the target cell membrane. Pore-forming protein that forms cations-selective hydrophilic pores of around 1 nm and causes cardiac stimulation and cytolysis. Pore formation is a multi-step process that involves specific recognition of membrane sphingomyelin (but neither cholesterol nor phosphatidylcholine) using aromatic rich region and adjacent phosphocholine (POC) binding site, firm binding to the membrane (mainly driven by hydrophobic interactions) accompanied by the transfer of the N-terminal region to the lipid-water interface and finally pore formation after oligomerization of monomers. This toxin shows hemolytic activities. This chain is Cytolysin SmT-1, found in Stichodactyla mertensii (Merten's carpet sea anemone).